Consider the following 161-residue polypeptide: Putative pre-16S rRNA nuclease (161 aa).

It belongs to the YqgF nuclease family.

The protein resides in the cytoplasm. Could be a nuclease involved in processing of the 5'-end of pre-16S rRNA. The polypeptide is Putative pre-16S rRNA nuclease (Prochlorococcus marinus (strain MIT 9313)).